Here is a 336-residue protein sequence, read N- to C-terminus: Neuropeptides B/W receptor type 2 (336 aa).

The interval 1 to 25 (MMEATGLEGLESTSSPCPGSTGTGL) is disordered. Residues 1-45 (MMEATGLEGLESTSSPCPGSTGTGLSWDNGTRHNATFPEPLPALY) are Extracellular-facing. Residues 12-25 (STSSPCPGSTGTGL) show a composition bias toward low complexity. 2 N-linked (GlcNAc...) asparagine glycosylation sites follow: Asn-29 and Asn-34. A helical transmembrane segment spans residues 46–68 (VLLPVVYSVICAVGLVGNAAVIC). Residues 69–80 (VILRAPKMKTVT) lie on the Cytoplasmic side of the membrane. A helical membrane pass occupies residues 81-103 (HVFILNLAIADGLFTLVLPTNIA). The Extracellular portion of the chain corresponds to 104 to 127 (EHLLQRWPFGEVLCKLVLAIDHCN). Cys-117 and Cys-197 form a disulfide bridge. A helical transmembrane segment spans residues 128 to 146 (IFSSVYFLAAMSIDRYLVV). At 147-165 (LATARSRRMPRRTVHRAKV) the chain is on the cytoplasmic side. The chain crosses the membrane as a helical span at residues 166 to 188 (ASLCVWLGVTVAVLPFLTFAGVY). Residues 189–213 (NNELQVTSCGLSFPRPERAWFQASR) lie on the Extracellular side of the membrane. Residues 214-236 (IYTLVLGFVVPMCTLCVLYADLL) form a helical membrane-spanning segment. At 237–256 (RRLRALRLHSGAKALGKAKR) the chain is on the cytoplasmic side. A helical transmembrane segment spans residues 257 to 279 (KVSLLVLAVLAVGLLCWTPFHLA). Residues 280–293 (SIVALTTDLPQTPL) lie on the Extracellular side of the membrane. Residues 294–316 (VIIVSYVVTSLSYTSSCLNPFLY) traverse the membrane as a helical segment. Residues 317-336 (AFLDHSFRKSLRTACRCQGA) lie on the Cytoplasmic side of the membrane.

It belongs to the G-protein coupled receptor 1 family.

The protein resides in the cell membrane. Interacts specifically with a number of opioid ligands. Receptor for neuropeptides B and W, which may be involved in neuroendocrine system regulation, food intake and the organization of other signals. The sequence is that of Neuropeptides B/W receptor type 2 (NPBWR2) from Bos taurus (Bovine).